Here is a 391-residue protein sequence, read N- to C-terminus: Processive diacylglycerol beta-glucosyltransferase (391 aa).

The protein belongs to the glycosyltransferase 28 family. UgtP subfamily.

It localises to the cell membrane. The catalysed reaction is a 1,2-diacyl-3-O-(beta-D-glucopyranosyl)-sn-glycerol + UDP-alpha-D-glucose = a 1,2-diacyl-3-O-(beta-D-Glc-(1-&gt;6)-beta-D-Glc)-sn-glycerol + UDP + H(+). It carries out the reaction a 1,2-diacyl-sn-glycerol + UDP-alpha-D-glucose = a 1,2-diacyl-3-O-(beta-D-glucopyranosyl)-sn-glycerol + UDP + H(+). The protein operates within glycolipid metabolism; diglucosyl-diacylglycerol biosynthesis. In terms of biological role, processive glucosyltransferase involved in the biosynthesis of both the bilayer- and non-bilayer-forming membrane glucolipids. Is able to successively transfer two glucosyl residues to diacylglycerol (DAG), thereby catalyzing the formation of beta-monoglucosyl-DAG (3-O-(beta-D-glucopyranosyl)-1,2-diacyl-sn-glycerol) and beta-diglucosyl-DAG (3-O-(beta-D-glucopyranosyl-beta-(1-&gt;6)-D-glucopyranosyl)-1,2-diacyl-sn-glycerol). Beta-diglucosyl-DAG is the predominant glycolipid found in Bacillales and is also used as a membrane anchor for lipoteichoic acid (LTA). This chain is Processive diacylglycerol beta-glucosyltransferase, found in Staphylococcus aureus (strain bovine RF122 / ET3-1).